Here is a 330-residue protein sequence, read N- to C-terminus: Olfactory receptor 5P70 (330 aa).

Residues 1 to 28 are Extracellular-facing; sequence MAFLEDGNHTIVTEFILLGLTDDPVLRD. N-linked (GlcNAc...) asparagine glycosylation occurs at N8. Residues 29-49 form a helical membrane-spanning segment; it reads ILFTIILCIYLVTVSGNLSTI. At 50 to 57 the chain is on the cytoplasmic side; the sequence is LLIRVSSQ. A helical transmembrane segment spans residues 58-78; that stretch reads LHHPMYFFLSHLASVDIGISS. Topologically, residues 79-102 are extracellular; that stretch reads SVTPNMLANFLVKPNTISYIGCSI. Residues C100 and C192 are joined by a disulfide bond. Residues 103–123 traverse the membrane as a helical segment; the sequence is QFTSAVFLATVECFLLAAMAY. The Cytoplasmic portion of the chain corresponds to 124–136; sequence DRFVAICNPLLYS. A helical membrane pass occupies residues 137-157; the sequence is TKMSREACIQLVVGSYIQGLL. The Extracellular portion of the chain corresponds to 158-199; the sequence is NASFFTLSFFSLIFCGPNRINHFYCDLAPLVELSCSDVTLAV. The chain crosses the membrane as a helical span at residues 200-220; sequence VITSISAGFITLTTVFVIAIS. Topologically, residues 221-240 are cytoplasmic; sequence YSCIFITIMKMHSTESRYKA. A helical transmembrane segment spans residues 241 to 261; the sequence is FSTCTSHLTAVTLFYGTTMFI. Topologically, residues 262–274 are extracellular; the sequence is YVMPKSSYSTDQN. A helical transmembrane segment spans residues 275-295; that stretch reads KVLSVFYMVVIPMLNPLIYSL. Topologically, residues 296 to 330 are cytoplasmic; it reads RNNEIKGALKRYLGKKIFSYGNLFCKTHYNDTHQV.

It belongs to the G-protein coupled receptor 1 family.

The protein resides in the cell membrane. Functionally, potential odorant receptor. This chain is Olfactory receptor 5P70, found in Mus musculus (Mouse).